The sequence spans 1035 residues: Sialidase A (1035 aa).

A signal peptide spans M1 to A53. The tract at residues A57–A112 is disordered. Over residues P61–N92 the composition is skewed to polar residues. The span at Q94–A112 shows a compositional bias: basic and acidic residues. R347 is a substrate binding site. The active-site Proton acceptor is the D372. BNR repeat units lie at residues R381–D392, S539–A550, and I607–A618. E647 is an active-site residue. R663 provides a ligand contact to substrate. One copy of the BNR 4 repeat lies at A672–K683. Residues G902 to A951 form a disordered region. The LPXTG sorting signal motif lies at L1003–G1007. The residue at position 1006 (T1006) is a Pentaglycyl murein peptidoglycan amidated threonine. The propeptide at G1007–Q1035 is removed by sortase.

This sequence belongs to the glycosyl hydrolase 33 family.

It localises to the secreted. It is found in the cell wall. The enzyme catalyses Hydrolysis of alpha-(2-&gt;3)-, alpha-(2-&gt;6)-, alpha-(2-&gt;8)- glycosidic linkages of terminal sialic acid residues in oligosaccharides, glycoproteins, glycolipids, colominic acid and synthetic substrates.. In Streptococcus pneumoniae, this protein is Sialidase A (nanA).